The primary structure comprises 673 residues: Glycine--tRNA ligase beta subunit (673 aa).

It belongs to the class-II aminoacyl-tRNA synthetase family. In terms of assembly, tetramer of two alpha and two beta subunits.

It localises to the cytoplasm. The enzyme catalyses tRNA(Gly) + glycine + ATP = glycyl-tRNA(Gly) + AMP + diphosphate. This chain is Glycine--tRNA ligase beta subunit, found in Lactococcus lactis subsp. cremoris (strain MG1363).